Consider the following 143-residue polypeptide: Transcriptional regulator SlyA (143 aa).

The HTH marR-type domain occupies 2–135; sequence ESTLGSDLAR…LANLIERLEQ (134 aa). The H-T-H motif DNA-binding region spans 49–72; that stretch reads QIQLAKAIGIEQPSLVRTLDQLED.

Belongs to the SlyA family. In terms of assembly, homodimer.

Its function is as follows. Transcription regulator that can specifically activate or repress expression of target genes. The chain is Transcriptional regulator SlyA from Edwardsiella ictaluri (strain 93-146).